The primary structure comprises 188 residues: UPF0301 protein Cag_1601 (188 aa).

It belongs to the UPF0301 (AlgH) family.

The protein is UPF0301 protein Cag_1601 of Chlorobium chlorochromatii (strain CaD3).